Consider the following 513-residue polypeptide: ATP synthase subunit alpha (513 aa).

169-176 provides a ligand contact to ATP; it reads GDRQTGKT.

It belongs to the ATPase alpha/beta chains family. As to quaternary structure, F-type ATPases have 2 components, CF(1) - the catalytic core - and CF(0) - the membrane proton channel. CF(1) has five subunits: alpha(3), beta(3), gamma(1), delta(1), epsilon(1). CF(0) has three main subunits: a(1), b(2) and c(9-12). The alpha and beta chains form an alternating ring which encloses part of the gamma chain. CF(1) is attached to CF(0) by a central stalk formed by the gamma and epsilon chains, while a peripheral stalk is formed by the delta and b chains.

The protein localises to the cell inner membrane. The catalysed reaction is ATP + H2O + 4 H(+)(in) = ADP + phosphate + 5 H(+)(out). In terms of biological role, produces ATP from ADP in the presence of a proton gradient across the membrane. The alpha chain is a regulatory subunit. This Thioalkalivibrio sulfidiphilus (strain HL-EbGR7) protein is ATP synthase subunit alpha.